A 171-amino-acid polypeptide reads, in one-letter code: RxLR effector protein CRE7 (171 aa).

The N-terminal stretch at 1 to 23 (MRAIAILLAVVATIFASLHGVSA) is a signal peptide. The RxLR-dEER signature appears at 46 to 59 (RRLRQTGDASDEER).

The protein belongs to the RxLR effector family.

It localises to the secreted. The protein localises to the host cell. Effector that is involved in host plant infection. Contributes to virulence during the early infection stage, by inhibiting plant defense responses induced by both PAMP-triggered immunity (PTI) and effector-triggered immunity (ETI). The protein is RxLR effector protein CRE7 of Phytophthora infestans (strain T30-4) (Potato late blight agent).